The primary structure comprises 89 residues: Putative regulatory protein BPUM_1466 (89 aa).

The protein belongs to the RemA family.

In Bacillus pumilus (strain SAFR-032), this protein is Putative regulatory protein BPUM_1466.